The chain runs to 162 residues: MKSLQKGFTLIELMIVVAIIGILAAFAIPAYNDYIARTQVSEGVSLADGLKIRIADNLQDGKCTSEGDPASGEVGNTDMGKYALATIEGTPDANLAGLTPKDPNGCKVKIEYGKGTAGDNISPLIKGQMLVLNQLVNGSYDKDSSSTVKPKFLPKALKEATP.

Residues 1 to 7 constitute a propeptide, leader sequence; it reads MKSLQKG. Phe8 is modified (N-methylphenylalanine). Residues 8-28 traverse the membrane as a helical segment; that stretch reads FTLIELMIVVAIIGILAAFAI. Cysteines 63 and 106 form a disulfide.

Belongs to the N-Me-Phe pilin family.

It localises to the fimbrium. The protein resides in the membrane. Functionally, major component of the type IV fimbriae that plays an essential role in twitching motility, natural transformation, and protease secretion. In Dichelobacter nodosus (strain VCS1703A), this protein is Type IV major fimbrial protein FimA (fimA).